The following is a 166-amino-acid chain: Macrocypin-5a (166 aa).

A disordered region spans residues 20–39; sequence NIPGGMYASSKDGKDEPVTA.

Belongs to the protease inhibitor I85 family.

Inhibits papain and cysteine cathepsin endopeptidases, and also inhibits cathepsins B and H, which exhibit both exopeptidase and endopeptidase activities. In Macrolepiota procera (Parasol mushroom), this protein is Macrocypin-5a.